The primary structure comprises 237 residues: Demethylmenaquinone methyltransferase (237 aa).

Residues Thr58, Asp79, and 106–107 contribute to the S-adenosyl-L-methionine site; that span reads NA.

Belongs to the class I-like SAM-binding methyltransferase superfamily. MenG/UbiE family.

It carries out the reaction a 2-demethylmenaquinol + S-adenosyl-L-methionine = a menaquinol + S-adenosyl-L-homocysteine + H(+). Its pathway is quinol/quinone metabolism; menaquinone biosynthesis; menaquinol from 1,4-dihydroxy-2-naphthoate: step 2/2. Methyltransferase required for the conversion of demethylmenaquinol (DMKH2) to menaquinol (MKH2). The sequence is that of Demethylmenaquinone methyltransferase from Bacillus cereus (strain ATCC 10987 / NRS 248).